Here is a 361-residue protein sequence, read N- to C-terminus: Phosphate acyltransferase (361 aa).

Belongs to the PlsX family. In terms of assembly, homodimer. Probably interacts with PlsY.

Its subcellular location is the cytoplasm. The enzyme catalyses a fatty acyl-[ACP] + phosphate = an acyl phosphate + holo-[ACP]. The protein operates within lipid metabolism; phospholipid metabolism. Its function is as follows. Catalyzes the reversible formation of acyl-phosphate (acyl-PO(4)) from acyl-[acyl-carrier-protein] (acyl-ACP). This enzyme utilizes acyl-ACP as fatty acyl donor, but not acyl-CoA. The polypeptide is Phosphate acyltransferase (Anaeromyxobacter dehalogenans (strain 2CP-C)).